The chain runs to 352 residues: CD5 antigen-like (352 aa).

The first 21 residues, 1–21 (MAPLFNLMLAILSIFVGSCFS), serve as a signal peptide directing secretion. SRCR domains follow at residues 27–128 (VQLV…AQCE), 141–241 (VRLV…MECE), and 246–348 (LKLV…VICT). Disulfide bonds link C36–C70, C52–C117, C65–C127, C98–C108, C166–C230, C179–C240, C211–C221, C255–C289, C271–C337, C284–C347, and C317–C327. N-linked (GlcNAc...) asparagine glycosylation is present at N99. N229 is a glycosylation site (N-linked (GlcNAc...) asparagine).

As to quaternary structure, interacts with FASN; the interaction is direct. Interacts (via SRCR2 and SRCR3) with pentameric IgM (via Fc region); disulfide-linked. Post-translationally, N-glycosylated. N-glycan at Asn-99 possesses only alpha2,6-sialylated terminals, while Asn-229 possesses both alpha2,6-sialylated and non-sialylated terminals. N-glycosylation increases secretion. In terms of tissue distribution, specifically expressed in tissue macrophages. Expressed in thymus, liver, spleen and lymph nodes. Present in Th17 cells; mainly present in non-pathogenic Th17 cells.

The protein resides in the secreted. It localises to the cytoplasm. Functionally, secreted protein that acts as a key regulator of lipid synthesis: mainly expressed by macrophages in lymphoid and inflamed tissues and regulates mechanisms in inflammatory responses, such as infection or atherosclerosis. Able to inhibit lipid droplet size in adipocytes. Following incorporation into mature adipocytes via CD36-mediated endocytosis, associates with cytosolic FASN, inhibiting fatty acid synthase activity and leading to lipolysis, the degradation of triacylglycerols into glycerol and free fatty acids (FFA). CD5L-induced lipolysis occurs with progression of obesity: participates in obesity-associated inflammation following recruitment of inflammatory macrophages into adipose tissues, a cause of insulin resistance and obesity-related metabolic disease. Regulation of intracellular lipids mediated by CD5L has a direct effect on transcription regulation mediated by nuclear receptors ROR-gamma (RORC). Acts as a key regulator of metabolic switch in T-helper Th17 cells. Regulates the expression of pro-inflammatory genes in Th17 cells by altering the lipid content and limiting synthesis of cholesterol ligand of RORC, the master transcription factor of Th17-cell differentiation. CD5L is mainly present in non-pathogenic Th17 cells, where it decreases the content of polyunsaturated fatty acyls (PUFA), affecting two metabolic proteins MSMO1 and CYP51A1, which synthesize ligands of RORC, limiting RORC activity and expression of pro-inflammatory genes. Participates in obesity-associated autoimmunity via its association with IgM, interfering with the binding of IgM to Fcalpha/mu receptor and enhancing the development of long-lived plasma cells that produce high-affinity IgG autoantibodies. Also acts as an inhibitor of apoptosis in macrophages: promotes macrophage survival from the apoptotic effects of oxidized lipids in case of atherosclerosis. Involved in early response to microbial infection against various pathogens by acting as a pattern recognition receptor and by promoting autophagy. The polypeptide is CD5 antigen-like (Cd5l) (Mus musculus (Mouse)).